The chain runs to 377 residues: Succinyl-diaminopimelate desuccinylase 2 (377 aa).

Histidine 62 serves as a coordination point for Zn(2+). The active site involves aspartate 64. A Zn(2+)-binding site is contributed by aspartate 95. Glutamate 129 acts as the Proton acceptor in catalysis. Positions 130, 158, and 350 each coordinate Zn(2+).

Belongs to the peptidase M20A family. DapE subfamily. Homodimer. Requires Zn(2+) as cofactor. The cofactor is Co(2+).

The catalysed reaction is N-succinyl-(2S,6S)-2,6-diaminopimelate + H2O = (2S,6S)-2,6-diaminopimelate + succinate. It participates in amino-acid biosynthesis; L-lysine biosynthesis via DAP pathway; LL-2,6-diaminopimelate from (S)-tetrahydrodipicolinate (succinylase route): step 3/3. Functionally, catalyzes the hydrolysis of N-succinyl-L,L-diaminopimelic acid (SDAP), forming succinate and LL-2,6-diaminopimelate (DAP), an intermediate involved in the bacterial biosynthesis of lysine and meso-diaminopimelic acid, an essential component of bacterial cell walls. The chain is Succinyl-diaminopimelate desuccinylase 2 from Shewanella loihica (strain ATCC BAA-1088 / PV-4).